A 509-amino-acid chain; its full sequence is UDP-N-acetylmuramoyl-L-alanyl-D-glutamate--2,6-diaminopimelate ligase (509 aa).

S30 is a binding site for UDP-N-acetyl-alpha-D-muramoyl-L-alanyl-D-glutamate. Position 110-116 (110-116 (GTNGKTT)) interacts with ATP. Residues 152-153 (TT), S179, Q185, and R187 each bind UDP-N-acetyl-alpha-D-muramoyl-L-alanyl-D-glutamate. At K219 the chain carries N6-carboxylysine. Residues R385, 409-412 (DNPR), G476, and E480 each bind meso-2,6-diaminopimelate. Residues 409 to 412 (DNPR) carry the Meso-diaminopimelate recognition motif motif.

This sequence belongs to the MurCDEF family. MurE subfamily. Mg(2+) serves as cofactor. In terms of processing, carboxylation is probably crucial for Mg(2+) binding and, consequently, for the gamma-phosphate positioning of ATP.

The protein localises to the cytoplasm. The enzyme catalyses UDP-N-acetyl-alpha-D-muramoyl-L-alanyl-D-glutamate + meso-2,6-diaminopimelate + ATP = UDP-N-acetyl-alpha-D-muramoyl-L-alanyl-gamma-D-glutamyl-meso-2,6-diaminopimelate + ADP + phosphate + H(+). The protein operates within cell wall biogenesis; peptidoglycan biosynthesis. In terms of biological role, catalyzes the addition of meso-diaminopimelic acid to the nucleotide precursor UDP-N-acetylmuramoyl-L-alanyl-D-glutamate (UMAG) in the biosynthesis of bacterial cell-wall peptidoglycan. The polypeptide is UDP-N-acetylmuramoyl-L-alanyl-D-glutamate--2,6-diaminopimelate ligase (Geobacter sulfurreducens (strain ATCC 51573 / DSM 12127 / PCA)).